The sequence spans 477 residues: Probable periplasmic serine endoprotease DegP-like (477 aa).

The first 27 residues, 1–27 (MSIPRLKSYLTMFAAVLMLGQVLTAQA), serve as a signal peptide directing secretion. Catalysis depends on charge relay system residues His-117, Asp-147, and Ser-220. Substrate-binding positions include 218–220 (GNS) and 275–279 (LGVVI). PDZ domains follow at residues 264–355 (LKKD…IRNG) and 361–466 (DISV…LRQG).

Belongs to the peptidase S1C family.

It localises to the periplasm. It catalyses the reaction Acts on substrates that are at least partially unfolded. The cleavage site P1 residue is normally between a pair of hydrophobic residues, such as Val-|-Val.. Might be efficient in the degradation of transiently denatured and unfolded proteins which accumulate in the periplasm following stress conditions. In Pseudomonas putida (strain GB-1), this protein is Probable periplasmic serine endoprotease DegP-like.